The following is a 204-amino-acid chain: 8-oxoguanine DNA glycosylase/AP lyase (204 aa).

Active-site residues include Lys128 and Asp146.

The protein belongs to the type-2 OGG1 family.

It catalyses the reaction 2'-deoxyribonucleotide-(2'-deoxyribose 5'-phosphate)-2'-deoxyribonucleotide-DNA = a 3'-end 2'-deoxyribonucleotide-(2,3-dehydro-2,3-deoxyribose 5'-phosphate)-DNA + a 5'-end 5'-phospho-2'-deoxyribonucleoside-DNA + H(+). Catalyzes the excision of an oxidatively damaged form of guanine (7,8-dihydro-8-oxoguanine = 8-oxoG) from DNA. Also cleaves the DNA backbone at apurinic/apyrimidinic sites (AP sites). This Sulfurisphaera tokodaii (strain DSM 16993 / JCM 10545 / NBRC 100140 / 7) (Sulfolobus tokodaii) protein is 8-oxoguanine DNA glycosylase/AP lyase.